Here is a 692-residue protein sequence, read N- to C-terminus: Methionine--tRNA ligase (692 aa).

The 'HIGH' region signature appears at 26-36 (PYANGSIHLGH). Cys-157, Cys-160, Cys-170, and Cys-173 together coordinate Zn(2+). Positions 342–346 (KMSKS) match the 'KMSKS' region motif. Lys-345 provides a ligand contact to ATP. One can recognise a tRNA-binding domain in the interval 590-692 (DFAKVDLRIA…SGAQPGMRVK (103 aa)).

The protein belongs to the class-I aminoacyl-tRNA synthetase family. MetG type 1 subfamily. In terms of assembly, homodimer. Zn(2+) is required as a cofactor.

It localises to the cytoplasm. It catalyses the reaction tRNA(Met) + L-methionine + ATP = L-methionyl-tRNA(Met) + AMP + diphosphate. Is required not only for elongation of protein synthesis but also for the initiation of all mRNA translation through initiator tRNA(fMet) aminoacylation. The chain is Methionine--tRNA ligase from Methylobacillus flagellatus (strain ATCC 51484 / DSM 6875 / VKM B-1610 / KT).